Consider the following 329-residue polypeptide: Fructose-1,6-bisphosphatase class 1 (329 aa).

Positions 84, 103, 105, and 106 each coordinate Mg(2+). Substrate-binding positions include 106–109, N196, and K262; that span reads DGSS. E268 serves as a coordination point for Mg(2+).

Belongs to the FBPase class 1 family. Homotetramer. The cofactor is Mg(2+).

Its subcellular location is the cytoplasm. The catalysed reaction is beta-D-fructose 1,6-bisphosphate + H2O = beta-D-fructose 6-phosphate + phosphate. Its pathway is carbohydrate biosynthesis; gluconeogenesis. In Shewanella loihica (strain ATCC BAA-1088 / PV-4), this protein is Fructose-1,6-bisphosphatase class 1.